An 80-amino-acid chain; its full sequence is Conotoxin VnMSGL-0121 (80 aa).

A signal peptide spans 1 to 20; sequence MSGLGIMVLTLLLLVSMATS. The propeptide occupies 21–44; sequence HQDGGGKQATQRDAINVRRRRSIT. 3 disulfides stabilise this stretch: C52-C65, C56-C74, and C64-C78. F79 is subject to Phenylalanine amide.

Belongs to the conotoxin O3 superfamily. Expressed by the venom duct.

The protein localises to the secreted. In Conus ventricosus (Mediterranean cone), this protein is Conotoxin VnMSGL-0121.